A 162-amino-acid polypeptide reads, in one-letter code: 6,7-dimethyl-8-ribityllumazine synthase (162 aa).

5-amino-6-(D-ribitylamino)uracil is bound by residues Y27, 58–60, and 87–89; these read ALE and CVI. Position 92–93 (92–93) interacts with (2S)-2-hydroxy-3-oxobutyl phosphate; that stretch reads ET. H95 functions as the Proton donor in the catalytic mechanism. 5-amino-6-(D-ribitylamino)uracil is bound at residue N120. (2S)-2-hydroxy-3-oxobutyl phosphate is bound at residue R134.

This sequence belongs to the DMRL synthase family.

It carries out the reaction (2S)-2-hydroxy-3-oxobutyl phosphate + 5-amino-6-(D-ribitylamino)uracil = 6,7-dimethyl-8-(1-D-ribityl)lumazine + phosphate + 2 H2O + H(+). The protein operates within cofactor biosynthesis; riboflavin biosynthesis; riboflavin from 2-hydroxy-3-oxobutyl phosphate and 5-amino-6-(D-ribitylamino)uracil: step 1/2. Catalyzes the formation of 6,7-dimethyl-8-ribityllumazine by condensation of 5-amino-6-(D-ribitylamino)uracil with 3,4-dihydroxy-2-butanone 4-phosphate. This is the penultimate step in the biosynthesis of riboflavin. The sequence is that of 6,7-dimethyl-8-ribityllumazine synthase from Azorhizobium caulinodans (strain ATCC 43989 / DSM 5975 / JCM 20966 / LMG 6465 / NBRC 14845 / NCIMB 13405 / ORS 571).